We begin with the raw amino-acid sequence, 508 residues long: Lysine--tRNA ligase (508 aa).

Residues E418 and E425 each coordinate Mg(2+).

This sequence belongs to the class-II aminoacyl-tRNA synthetase family. As to quaternary structure, homodimer. Requires Mg(2+) as cofactor.

The protein localises to the cytoplasm. It catalyses the reaction tRNA(Lys) + L-lysine + ATP = L-lysyl-tRNA(Lys) + AMP + diphosphate. The protein is Lysine--tRNA ligase of Burkholderia pseudomallei (strain 668).